The sequence spans 426 residues: Ornithine aminotransferase (426 aa).

Lys-291 bears the N6-(pyridoxal phosphate)lysine mark.

The protein belongs to the class-III pyridoxal-phosphate-dependent aminotransferase family. Pyridoxal 5'-phosphate is required as a cofactor.

It carries out the reaction a 2-oxocarboxylate + L-ornithine = L-glutamate 5-semialdehyde + an L-alpha-amino acid. Its pathway is amino-acid biosynthesis; L-proline biosynthesis; L-glutamate 5-semialdehyde from L-ornithine: step 1/1. This is Ornithine aminotransferase from Vigna aconitifolia (Moth bean).